The primary structure comprises 728 residues: Catalase-peroxidase 1 (728 aa).

The N-terminal stretch at 1 to 22 (MDKTQSSQGKCPVMHGANSAVA) is a signal peptide. Residues 97 to 225 (WHSAGTYRVA…LAAVMMGLIY (129 aa)) constitute a cross-link (tryptophyl-tyrosyl-methioninium (Trp-Tyr) (with M-251)). The active-site Proton acceptor is the H98. Positions 225–251 (YVNPEGVDGKPDPLRTAQDVRVTFARM) form a cross-link, tryptophyl-tyrosyl-methioninium (Tyr-Met) (with W-97). Position 266 (H266) interacts with heme b.

Belongs to the peroxidase family. Peroxidase/catalase subfamily. Homodimer or homotetramer. The cofactor is heme b. Formation of the three residue Trp-Tyr-Met cross-link is important for the catalase, but not the peroxidase activity of the enzyme.

The enzyme catalyses H2O2 + AH2 = A + 2 H2O. It catalyses the reaction 2 H2O2 = O2 + 2 H2O. Bifunctional enzyme with both catalase and broad-spectrum peroxidase activity. This is Catalase-peroxidase 1 from Shewanella sp. (strain ANA-3).